Consider the following 668-residue polypeptide: tRNA 5-methylaminomethyl-2-thiouridine biosynthesis bifunctional protein MnmC (668 aa).

Residues 1-245 are tRNA (mnm(5)s(2)U34)-methyltransferase; that stretch reads MKHYAIQPAN…KREMLCGVME (245 aa). An FAD-dependent cmnm(5)s(2)U34 oxidoreductase region spans residues 270–668; sequence IGGGIASALL…LLKGKAVKAG (399 aa).

In the N-terminal section; belongs to the methyltransferase superfamily. tRNA (mnm(5)s(2)U34)-methyltransferase family. This sequence in the C-terminal section; belongs to the DAO family. FAD is required as a cofactor.

The protein localises to the cytoplasm. It carries out the reaction 5-aminomethyl-2-thiouridine(34) in tRNA + S-adenosyl-L-methionine = 5-methylaminomethyl-2-thiouridine(34) in tRNA + S-adenosyl-L-homocysteine + H(+). Catalyzes the last two steps in the biosynthesis of 5-methylaminomethyl-2-thiouridine (mnm(5)s(2)U) at the wobble position (U34) in tRNA. Catalyzes the FAD-dependent demodification of cmnm(5)s(2)U34 to nm(5)s(2)U34, followed by the transfer of a methyl group from S-adenosyl-L-methionine to nm(5)s(2)U34, to form mnm(5)s(2)U34. The protein is tRNA 5-methylaminomethyl-2-thiouridine biosynthesis bifunctional protein MnmC of Escherichia coli O139:H28 (strain E24377A / ETEC).